A 1122-amino-acid polypeptide reads, in one-letter code: Maestro heat-like repeat-containing protein family member 7 (1122 aa).

Disordered regions lie at residues 1–144 (MALS…LSED) and 183–203 (SHTI…NTSL). A compositionally biased stretch (low complexity) spans 33–65 (TTPRPTPDLTLAPLPAHGVALAPALHPALSPDP). 3 stretches are compositionally biased toward polar residues: residues 75–95 (DISN…INTA), 120–136 (PVPS…SPEN), and 184–203 (HTIS…NTSL). N-linked (GlcNAc...) asparagine glycosylation is found at Asn200, Asn210, Asn255, Asn267, and Asn296. The segment at 246-265 (WNTGSKGSVNVTSNSQPRSG) is disordered. Residue Ser356 is modified to Phosphoserine. A disordered region spans residues 363–385 (FRSPPEGTSEDAKANESEKRDHD). Residues 372–385 (EDAKANESEKRDHD) are compositionally biased toward basic and acidic residues. 2 N-linked (GlcNAc...) asparagine glycosylation sites follow: Asn541 and Asn546. A run of 2 helical transmembrane segments spans residues 548–568 (TLVT…LLLG) and 722–742 (LLPI…ALLM). HEAT repeat units lie at residues 913 to 950 (QELC…MEQV), 992 to 1029 (TKVQ…GQAK), 1035 to 1072 (SVYI…KLRM), and 1080 to 1117 (EQLT…FFLL).

The protein resides in the membrane. The polypeptide is Maestro heat-like repeat-containing protein family member 7 (Mroh7) (Rattus norvegicus (Rat)).